Reading from the N-terminus, the 331-residue chain is Fe-S cluster assembly protein DRE2 (331 aa).

The tract at residues 1 to 146 (MSEILLLLHP…MPTFKKPVSS (146 aa)) is N-terminal SAM-like domain. Residues 142 to 164 (KPVSSPVTLTDTSANNTDAEDDL) form a disordered region. Residues 146 to 158 (SPVTLTDTSANNT) are compositionally biased toward polar residues. Residues 147-202 (PVTLTDTSANNTDAEDDLSMKRKLDSTKLAYFSDDSSGEEDDLIDENELIADSHKF) are linker. Positions 212, 224, 227, and 229 each coordinate [2Fe-2S] cluster. Positions 212–229 (CELPNGKKRKKACKDCTC) are fe-S binding site A. Positions 294, 297, 305, and 308 each coordinate [4Fe-4S] cluster. 2 short sequence motifs (cx2C motif) span residues 294–297 (CSSC) and 305–308 (CDGC). The tract at residues 294–308 (CSSCALGDAFRCDGC) is fe-S binding site B.

It belongs to the anamorsin family. Monomer. Interacts with TAH18. Interacts with MIA40. Requires [2Fe-2S] cluster as cofactor. [4Fe-4S] cluster is required as a cofactor.

It localises to the cytoplasm. The protein resides in the mitochondrion intermembrane space. Functionally, component of the cytosolic iron-sulfur (Fe-S) protein assembly (CIA) machinery required for the maturation of extramitochondrial Fe-S proteins. Part of an electron transfer chain functioning in an early step of cytosolic Fe-S biogenesis, facilitating the de novo assembly of a [4Fe-4S] cluster on the scaffold complex CFD1-NBP35. Electrons are transferred to DRE2 from NADPH via the FAD- and FMN-containing protein TAH18. TAH18-DRE2 are also required for the assembly of the diferric tyrosyl radical cofactor of ribonucleotide reductase (RNR), probably by providing electrons for reduction during radical cofactor maturation in the catalytic small subunit RNR2. The chain is Fe-S cluster assembly protein DRE2 from Clavispora lusitaniae (strain ATCC 42720) (Yeast).